The primary structure comprises 450 residues: tRNA modification GTPase MnmE (450 aa).

Arg-23, Glu-79, and Lys-118 together coordinate (6S)-5-formyl-5,6,7,8-tetrahydrofolate. A TrmE-type G domain is found at 214-374; sequence GITLILVGKP…LKEHILNKVG (161 aa). Asn-224 lines the K(+) pocket. GTP is bound by residues 224-229, 243-249, and 268-271; these read NAGKSS, TSIAGTT, and DTAG. Residue Ser-228 participates in Mg(2+) binding. Positions 243, 245, and 248 each coordinate K(+). Position 249 (Thr-249) interacts with Mg(2+). Lys-450 provides a ligand contact to (6S)-5-formyl-5,6,7,8-tetrahydrofolate.

This sequence belongs to the TRAFAC class TrmE-Era-EngA-EngB-Septin-like GTPase superfamily. TrmE GTPase family. In terms of assembly, homodimer. Heterotetramer of two MnmE and two MnmG subunits. The cofactor is K(+).

It is found in the cytoplasm. Functionally, exhibits a very high intrinsic GTPase hydrolysis rate. Involved in the addition of a carboxymethylaminomethyl (cmnm) group at the wobble position (U34) of certain tRNAs, forming tRNA-cmnm(5)s(2)U34. The polypeptide is tRNA modification GTPase MnmE (Francisella tularensis subsp. holarctica (strain OSU18)).